The chain runs to 872 residues: Sine oculis-binding protein homolog (872 aa).

The span at 1–14 (MAEMEKEGRPPENK) shows a compositional bias: basic and acidic residues. The interval 1-26 (MAEMEKEGRPPENKRSRKPAHPVKRE) is disordered. 2 FCS-type zinc fingers span residues 142–180 (DDVS…KCFA) and 216–256 (FKNN…KCLN). 3 disordered regions span residues 308 to 354 (RRKA…KSMP), 411 to 484 (FIRG…PGAP), and 550 to 619 (KPPN…GRSE). Positions 319–344 (GQSQGPGPSASTTVSPSDTANCSVTK) are enriched in polar residues. Residues 417–433 (HHASNPNSPLSNPMLPG) show a composition bias toward low complexity. The segment covering 460 to 484 (IHPPSTPTMPGNPPGLLPPPPPGAP) has biased composition (pro residues). The SUMO interaction motif 1 (SIM); mediates the binding to polysumoylated substrates signature appears at 620–624 (VVDLT). At serine 629 the chain carries Phosphoserine. An SUMO interaction motif 2 (SIM); mediates the binding to polysumoylated substrates motif is present at residues 651 to 655 (VIDLT). A Glycyl lysine isopeptide (Lys-Gly) (interchain with G-Cter in SUMO2) cross-link involves residue lysine 675. Position 697 is a phosphoserine (serine 697). The segment at 728 to 770 (AAEGAKGAEPPPEQPPPPPPPPPAPPKKLLSPEEPAVSELESV) is disordered. Positions 736 to 753 (EPPPEQPPPPPPPPPAPP) are enriched in pro residues.

This sequence belongs to the SOBP family. In terms of assembly, interacts (via SIM domains) with SUMO1 and SUMO2.

Its function is as follows. Implicated in development of the cochlea. The protein is Sine oculis-binding protein homolog of Bos taurus (Bovine).